We begin with the raw amino-acid sequence, 356 residues long: Alpha-N-acetylneuraminide alpha-2,8-sialyltransferase (356 aa).

Topologically, residues 1–29 (MSPCGRARRHTSRGAMAVLAWKFPRTRLP) are cytoplasmic. The chain crosses the membrane as a helical; Signal-anchor for type II membrane protein span at residues 30-48 (VGASALCVVVLCWLYVFPV). Residues 49 to 356 (YRLPDEKEIV…CEDNSLQPTS (308 aa)) are Lumenal-facing. 2 N-linked (GlcNAc...) asparagine glycosylation sites follow: asparagine 71 and asparagine 119. The cysteines at positions 138 and 287 are disulfide-linked. CMP-N-acetyl-beta-neuraminate is bound by residues asparagine 143 and asparagine 166. Asparagine 214 and asparagine 245 each carry an N-linked (GlcNAc...) asparagine glycan. CMP-N-acetyl-beta-neuraminate contacts are provided by serine 274, threonine 275, glycine 276, tryptophan 296, and histidine 310.

Belongs to the glycosyltransferase 29 family.

It is found in the golgi apparatus membrane. The enzyme catalyses an N-acetyl-alpha-neuraminyl-(2-&gt;3)-beta-D-galactosyl derivative + CMP-N-acetyl-beta-neuraminate = an N-acetyl-alpha-neuraminyl-(2-&gt;8)-N-acetyl-alpha-neuraminyl-(2-&gt;3)-beta-D-galactosyl derivative + CMP + H(+). It carries out the reaction a ganglioside GM3 (d18:1(4E)) + CMP-N-acetyl-beta-neuraminate = a ganglioside GD3 (d18:1(4E)) + CMP + H(+). It catalyses the reaction a ganglioside GD3 (d18:1(4E)) + CMP-N-acetyl-beta-neuraminate = a ganglioside GT3 (d18:1(4E)) + CMP + H(+). The catalysed reaction is a ganglioside GD1a (d18:1(4E)) + CMP-N-acetyl-beta-neuraminate = a ganglioside GT1a (d18:1(4E)) + CMP + H(+). The enzyme catalyses a ganglioside GT1b (d18:1(4E)) + CMP-N-acetyl-beta-neuraminate = a ganglioside GQ1b (d18:1(4E)) + CMP + H(+). It carries out the reaction a ganglioside GM1b (d18:1(4E)) + CMP-N-acetyl-beta-neuraminate = a ganglioside GD1c (d18:1(4E)) + CMP + H(+). It catalyses the reaction a ganglioside GD3 + CMP-N-acetyl-beta-neuraminate = a ganglioside GT3 + CMP + H(+). The catalysed reaction is [alpha-N-acetylneuraminyl-(2-&gt;8)](n)-alpha-N-acetylneuraminyl-(2-&gt;8)-alpha-N-acetylneuraminyl-(2-&gt;3)-beta-D-galactosyl-(1-&gt;4)-beta-D-glucosyl-(1&lt;-&gt;1)-ceramide + CMP-N-acetyl-beta-neuraminate = [alpha-N-acetylneuraminyl-(2-&gt;8)](n+1)-alpha-N-acetylneuraminyl-(2-&gt;8)-alpha-N-acetylneuraminyl-(2-&gt;3)-beta-D-galactosyl-(1-&gt;4)-beta-D-glucosyl-(1&lt;-&gt;1)-ceramide + CMP + H(+). It functions in the pathway protein modification; protein glycosylation. The protein operates within lipid metabolism; sphingolipid metabolism. Its function is as follows. Catalyzes the addition of sialic acid in alpha 2,8-linkage to the sialic acid moiety of the ganglioside GM3 to form ganglioside GD3; gangliosides are a subfamily of complex glycosphingolipds that contain one or more residues of sialic acid. Can catalyze the addition of a second alpha-2,8- sialic acid to GD3 to form GT3. Can use GM1b, GD1a and GT1b as acceptor substrates to synthesize GD1c, GT1a and GQ1b respectively. The protein is Alpha-N-acetylneuraminide alpha-2,8-sialyltransferase of Bos taurus (Bovine).